Here is a 545-residue protein sequence, read N- to C-terminus: Threonine--tRNA ligase catalytic subunit (545 aa).

The interval 139–433 is catalytic; it reads DHRLIGEKLD…LLEHFKGKLP (295 aa). Positions 231, 282, and 410 each coordinate Zn(2+).

It belongs to the class-II aminoacyl-tRNA synthetase family. In terms of assembly, homodimer. Probably interacts with its editing subunit. Requires Zn(2+) as cofactor.

It is found in the cytoplasm. The catalysed reaction is tRNA(Thr) + L-threonine + ATP = L-threonyl-tRNA(Thr) + AMP + diphosphate + H(+). In terms of biological role, catalyzes the attachment of threonine to tRNA(Thr) in a two-step reaction: L-threonine is first activated by ATP to form Thr-AMP and then transferred to the acceptor end of tRNA(Thr). Also activates L-serine and transfers it to tRNA(Thr) but cannot deacylate incorrectly charged amino acid; unlike most archaea the editing function is found in a freestanding protein. This chain is Threonine--tRNA ligase catalytic subunit, found in Saccharolobus islandicus (strain L.S.2.15 / Lassen #1) (Sulfolobus islandicus).